We begin with the raw amino-acid sequence, 283 residues long: MREEEKKTSQVKKLQQFFRKRWVFPAIYLVSAAVILTAVLWYQSVSNDEVKDQLADNGGNSAYDNNDDAVEVGKSMENVAMPVVDSENVSVVKKFYETDAAKEEKEAALVTYNNTYSLSKGIDLAEKDGKDFDVSASLSGTVVKAEKDPVLGYVVEVEHADGLSTVYQSLSEVSVEQGDKVKQNQVIGKSGKNLYSEDSGNHVHFEIRKDGVAMNPLNFMDKPVSSIEKAATQETEESIQQSSEKKDGSTEKGTEEKSGEKKDDSTDKSGSKESSTTEDTEQS.

Residues 22–42 (WVFPAIYLVSAAVILTAVLWY) traverse the membrane as a helical segment. The tract at residues 228 to 283 (EKAATQETEESIQQSSEKKDGSTEKGTEEKSGEKKDDSTDKSGSKESSTTEDTEQS) is disordered. Positions 243–271 (SEKKDGSTEKGTEEKSGEKKDDSTDKSGS) are enriched in basic and acidic residues.

Interacts with SpoIIIAH and SpoIIE.

The protein resides in the forespore membrane. In terms of biological role, involved in forespore engulfment and required for anchoring membrane proteins on the forespore side of the septal membrane. Forms a channel with SpoIIIAH that is open on the forespore end and closed (or gated) on the mother cell end. This allows sigma-E-directed gene expression in the mother-cell compartment of the sporangium to trigger the activation of sigma-G forespore-specific gene expression by a pathway of intercellular signaling. In Bacillus subtilis (strain 168), this protein is Stage II sporulation protein Q (spoIIQ).